A 380-amino-acid polypeptide reads, in one-letter code: tRNA-specific 2-thiouridylase MnmA (380 aa).

ATP is bound by residues 25 to 32 (AMSGGVDS) and Met-51. Cys-119 functions as the Nucleophile in the catalytic mechanism. Cysteines 119 and 216 form a disulfide. An ATP-binding site is contributed by Gly-143. Positions 166-168 (KDQ) are interaction with tRNA. The Cysteine persulfide intermediate role is filled by Cys-216. The segment at 320–321 (RY) is interaction with tRNA.

Belongs to the MnmA/TRMU family.

Its subcellular location is the cytoplasm. The enzyme catalyses S-sulfanyl-L-cysteinyl-[protein] + uridine(34) in tRNA + AH2 + ATP = 2-thiouridine(34) in tRNA + L-cysteinyl-[protein] + A + AMP + diphosphate + H(+). Its function is as follows. Catalyzes the 2-thiolation of uridine at the wobble position (U34) of tRNA, leading to the formation of s(2)U34. The polypeptide is tRNA-specific 2-thiouridylase MnmA (Deinococcus radiodurans (strain ATCC 13939 / DSM 20539 / JCM 16871 / CCUG 27074 / LMG 4051 / NBRC 15346 / NCIMB 9279 / VKM B-1422 / R1)).